We begin with the raw amino-acid sequence, 718 residues long: MPTEGSTVDTLTIEEAAAELARLAKEIAHHDALYHGKDQPEISDADYDALKRRNDALEVRFPELIREDSPSRHVGAAPSVTFSPVVHARPMLSLDNTFSQEDVQDFVAGVYRFLGRLPDQSIAFTAEPKIDGLSMSIRYENGRLVTAATRGDGTTGENVTANIRTIAEIPNELPKGVPAVVEIRGEVYMAKSDFLALNRQMEAEGKQTYVNPRNTAAGSLRQLDAKVTASRKLKFFAYAWGEMSEMPADTQFGMVQTFKDWGFPVNPLMKRLNSVADILAHYDEIGLERPDLDYDIDGVVYKVDSLELQARLGFRSRSPRWATAHKFPAEQAFTIVENIDIQVGRTGALTPVARLTPITVGGVVVTNATLHNADYIQGIGNSGERIRDDEHDIRIGDTVIVQRAGDVIPQVLDVVMEKRPAEARPYEFPKTCPVCGSHAVRERHEKTGKLDSVTRCTGGFICRAQATEHLKHFVSRNAFDIEGLGSKQIDFFFENEDASLQIRTAPDIFTLEKRQQQSLTKLENIDGFGKVSVGKLYGAIDERRSIALHRFIYALGIRHVGETTAKLLARSYGTYEAFETAMREAEALSGDAWNDLNAIEGIGEVVARAIVEFYKEPRNVEVITRLLEEVTPEEAEQPKTAGSPVAGKTVVFTGSLEKLTRDEAKARAESLGAKVAGSVSKKTDIVVAGPGAGSKLDKARELGVQTMDEDQWLALISG.

NAD(+) is bound by residues 44–48, 93–94, and glutamate 127; these read DADYD and SL. Lysine 129 functions as the N6-AMP-lysine intermediate in the catalytic mechanism. Residues arginine 150, glutamate 186, lysine 302, and lysine 326 each coordinate NAD(+). Zn(2+) contacts are provided by cysteine 432, cysteine 435, cysteine 456, and cysteine 462. A BRCT domain is found at 640–718; sequence TAGSPVAGKT…EDQWLALISG (79 aa).

This sequence belongs to the NAD-dependent DNA ligase family. LigA subfamily. Mg(2+) serves as cofactor. The cofactor is Mn(2+).

The enzyme catalyses NAD(+) + (deoxyribonucleotide)n-3'-hydroxyl + 5'-phospho-(deoxyribonucleotide)m = (deoxyribonucleotide)n+m + AMP + beta-nicotinamide D-nucleotide.. In terms of biological role, DNA ligase that catalyzes the formation of phosphodiester linkages between 5'-phosphoryl and 3'-hydroxyl groups in double-stranded DNA using NAD as a coenzyme and as the energy source for the reaction. It is essential for DNA replication and repair of damaged DNA. The chain is DNA ligase from Rhizobium johnstonii (strain DSM 114642 / LMG 32736 / 3841) (Rhizobium leguminosarum bv. viciae).